The sequence spans 225 residues: Ribose-5-phosphate isomerase A (225 aa).

Substrate is bound by residues 32 to 35 (TGST), 85 to 88 (DGAD), and 98 to 101 (KGGG). Glu-107 acts as the Proton acceptor in catalysis. Lys-125 is a binding site for substrate.

Belongs to the ribose 5-phosphate isomerase family. As to quaternary structure, homodimer.

It carries out the reaction aldehydo-D-ribose 5-phosphate = D-ribulose 5-phosphate. The protein operates within carbohydrate degradation; pentose phosphate pathway; D-ribose 5-phosphate from D-ribulose 5-phosphate (non-oxidative stage): step 1/1. Catalyzes the reversible conversion of ribose-5-phosphate to ribulose 5-phosphate. The sequence is that of Ribose-5-phosphate isomerase A from Hahella chejuensis (strain KCTC 2396).